Consider the following 317-residue polypeptide: 4-hydroxy-3-methylbut-2-enyl diphosphate reductase (317 aa).

A [4Fe-4S] cluster-binding site is contributed by C12. H41 and H74 together coordinate (2E)-4-hydroxy-3-methylbut-2-enyl diphosphate. Dimethylallyl diphosphate contacts are provided by H41 and H74. Residues H41 and H74 each contribute to the isopentenyl diphosphate site. C96 is a binding site for [4Fe-4S] cluster. Residue H124 coordinates (2E)-4-hydroxy-3-methylbut-2-enyl diphosphate. Dimethylallyl diphosphate is bound at residue H124. Residue H124 coordinates isopentenyl diphosphate. Residue E126 is the Proton donor of the active site. (2E)-4-hydroxy-3-methylbut-2-enyl diphosphate is bound at residue T169. Residue C199 participates in [4Fe-4S] cluster binding. The (2E)-4-hydroxy-3-methylbut-2-enyl diphosphate site is built by S227, S228, N229, and S271. Positions 227, 228, 229, and 271 each coordinate dimethylallyl diphosphate. The isopentenyl diphosphate site is built by S227, S228, N229, and S271.

The protein belongs to the IspH family. Requires [4Fe-4S] cluster as cofactor.

It catalyses the reaction isopentenyl diphosphate + 2 oxidized [2Fe-2S]-[ferredoxin] + H2O = (2E)-4-hydroxy-3-methylbut-2-enyl diphosphate + 2 reduced [2Fe-2S]-[ferredoxin] + 2 H(+). It carries out the reaction dimethylallyl diphosphate + 2 oxidized [2Fe-2S]-[ferredoxin] + H2O = (2E)-4-hydroxy-3-methylbut-2-enyl diphosphate + 2 reduced [2Fe-2S]-[ferredoxin] + 2 H(+). It participates in isoprenoid biosynthesis; dimethylallyl diphosphate biosynthesis; dimethylallyl diphosphate from (2E)-4-hydroxy-3-methylbutenyl diphosphate: step 1/1. The protein operates within isoprenoid biosynthesis; isopentenyl diphosphate biosynthesis via DXP pathway; isopentenyl diphosphate from 1-deoxy-D-xylulose 5-phosphate: step 6/6. Catalyzes the conversion of 1-hydroxy-2-methyl-2-(E)-butenyl 4-diphosphate (HMBPP) into a mixture of isopentenyl diphosphate (IPP) and dimethylallyl diphosphate (DMAPP). Acts in the terminal step of the DOXP/MEP pathway for isoprenoid precursor biosynthesis. The sequence is that of 4-hydroxy-3-methylbut-2-enyl diphosphate reductase from Vibrio parahaemolyticus serotype O3:K6 (strain RIMD 2210633).